Reading from the N-terminus, the 346-residue chain is Flap endonuclease 1 (346 aa).

Positions M1–R102 are N-domain. Residues D31, D84, E156, E158, D177, D179, and D239 each coordinate Mg(2+). Residues D120–G261 form an I-domain region.

It belongs to the XPG/RAD2 endonuclease family. FEN1 subfamily. As to quaternary structure, interacts with PCNA. PCNA stimulates the nuclease activity without altering cleavage specificity. The cofactor is Mg(2+).

In terms of biological role, structure-specific nuclease with 5'-flap endonuclease and 5'-3' exonuclease activities involved in DNA replication and repair. During DNA replication, cleaves the 5'-overhanging flap structure that is generated by displacement synthesis when DNA polymerase encounters the 5'-end of a downstream Okazaki fragment. Binds the unpaired 3'-DNA end and kinks the DNA to facilitate 5' cleavage specificity. Cleaves one nucleotide into the double-stranded DNA from the junction in flap DNA, leaving a nick for ligation. Also involved in the base excision repair (BER) pathway. Acts as a genome stabilization factor that prevents flaps from equilibrating into structures that lead to duplications and deletions. Also possesses 5'-3' exonuclease activity on nicked or gapped double-stranded DNA. This Pyrobaculum aerophilum (strain ATCC 51768 / DSM 7523 / JCM 9630 / CIP 104966 / NBRC 100827 / IM2) protein is Flap endonuclease 1.